Consider the following 193-residue polypeptide: Frataxin, mitochondrial (193 aa).

Residues 1-72 (MIFNFLNKAS…KQQQQLSKSF (72 aa)) constitute a mitochondrion transit peptide.

It belongs to the frataxin family. As to quaternary structure, monomer. Oligomer.

It is found in the mitochondrion. The catalysed reaction is 4 Fe(2+) + O2 + 4 H(+) = 4 Fe(3+) + 2 H2O. In terms of biological role, promotes the biosynthesis of heme as well as the assembly and repair of iron-sulfur clusters by delivering Fe(2+) to proteins involved in these pathways. May play a role in the protection against iron-catalyzed oxidative stress through its ability to catalyze the oxidation of Fe(2+) to Fe(3+). May be able to store large amounts of the metal in the form of a ferrihydrite mineral by oligomerization. This is Frataxin, mitochondrial (fxn) from Dictyostelium discoideum (Social amoeba).